The sequence spans 57 residues: Small ribosomal subunit protein bS21 (57 aa).

The disordered stretch occupies residues 34-57 (RKEHYIKPSVQKKNRQKNMRSKKR). Residues 43 to 57 (VQKKNRQKNMRSKKR) show a composition bias toward basic residues.

It belongs to the bacterial ribosomal protein bS21 family.

The polypeptide is Small ribosomal subunit protein bS21 (Aster yellows witches'-broom phytoplasma (strain AYWB)).